The chain runs to 290 residues: Phosphoribosylaminoimidazole-succinocarboxamide synthase (290 aa).

This sequence belongs to the SAICAR synthetase family.

It catalyses the reaction 5-amino-1-(5-phospho-D-ribosyl)imidazole-4-carboxylate + L-aspartate + ATP = (2S)-2-[5-amino-1-(5-phospho-beta-D-ribosyl)imidazole-4-carboxamido]succinate + ADP + phosphate + 2 H(+). The protein operates within purine metabolism; IMP biosynthesis via de novo pathway; 5-amino-1-(5-phospho-D-ribosyl)imidazole-4-carboxamide from 5-amino-1-(5-phospho-D-ribosyl)imidazole-4-carboxylate: step 1/2. The chain is Phosphoribosylaminoimidazole-succinocarboxamide synthase from Haemophilus influenzae (strain PittGG).